The primary structure comprises 250 residues: Geranylgeranylglyceryl phosphate synthase (250 aa).

Mg(2+) contacts are provided by Asp26 and Ser55. Residues 174-180 (YLEAGSG), 205-206 (GG), and 227-228 (GT) contribute to the sn-glycerol 1-phosphate site.

Belongs to the GGGP/HepGP synthase family. Group II subfamily. It depends on Mg(2+) as a cofactor.

It localises to the cytoplasm. The catalysed reaction is sn-glycerol 1-phosphate + (2E,6E,10E)-geranylgeranyl diphosphate = sn-3-O-(geranylgeranyl)glycerol 1-phosphate + diphosphate. It functions in the pathway membrane lipid metabolism; glycerophospholipid metabolism. Prenyltransferase that catalyzes the transfer of the geranylgeranyl moiety of geranylgeranyl diphosphate (GGPP) to the C3 hydroxyl of sn-glycerol-1-phosphate (G1P). This reaction is the first ether-bond-formation step in the biosynthesis of archaeal membrane lipids. The protein is Geranylgeranylglyceryl phosphate synthase of Nitrosopumilus maritimus (strain SCM1).